A 369-amino-acid chain; its full sequence is Chaperone protein DnaJ (369 aa).

Residues 4-69 form the J domain; it reads SYYEILEVEK…KKRALYDRYG (66 aa). Residues 130–207 form a CR-type zinc finger; sequence GCKKTIKAQY…CKGKTYILKD (78 aa). Zn(2+) is bound by residues C143, C146, C159, C162, C181, C184, C195, and C198. CXXCXGXG motif repeat units lie at residues 143-150, 159-166, 181-188, and 195-202; these read CESCDGTG, CKQCNGQG, CGACQGKG, and CQACKGKT.

Belongs to the DnaJ family. Homodimer. Zn(2+) serves as cofactor.

The protein localises to the cytoplasm. In terms of biological role, participates actively in the response to hyperosmotic and heat shock by preventing the aggregation of stress-denatured proteins and by disaggregating proteins, also in an autonomous, DnaK-independent fashion. Unfolded proteins bind initially to DnaJ; upon interaction with the DnaJ-bound protein, DnaK hydrolyzes its bound ATP, resulting in the formation of a stable complex. GrpE releases ADP from DnaK; ATP binding to DnaK triggers the release of the substrate protein, thus completing the reaction cycle. Several rounds of ATP-dependent interactions between DnaJ, DnaK and GrpE are required for fully efficient folding. Also involved, together with DnaK and GrpE, in the DNA replication of plasmids through activation of initiation proteins. The chain is Chaperone protein DnaJ from Helicobacter pylori (strain J99 / ATCC 700824) (Campylobacter pylori J99).